The following is a 58-amino-acid chain: Small ribosomal subunit protein bS21 (58 aa).

Residues 32–42 are compositionally biased toward basic and acidic residues; the sequence is VRKREHYEKPS. The interval 32–58 is disordered; sequence VRKREHYEKPSVKKKKKSEAARKRKFK. Basic residues predominate over residues 43–58; sequence VKKKKKSEAARKRKFK.

This sequence belongs to the bacterial ribosomal protein bS21 family.

The protein is Small ribosomal subunit protein bS21 of Clostridium botulinum (strain Okra / Type B1).